A 341-amino-acid polypeptide reads, in one-letter code: Methionine import ATP-binding protein MetN 3 (341 aa).

Residues 2 to 241 (ILLENVKKIY…PQQDITKRFV (240 aa)) enclose the ABC transporter domain. 38–45 (GYSGAGKS) contributes to the ATP binding site.

The protein belongs to the ABC transporter superfamily. Methionine importer (TC 3.A.1.24) family. In terms of assembly, the complex is composed of two ATP-binding proteins (MetN), two transmembrane proteins (MetI) and a solute-binding protein (MetQ).

It is found in the cell membrane. It carries out the reaction L-methionine(out) + ATP + H2O = L-methionine(in) + ADP + phosphate + H(+). The catalysed reaction is D-methionine(out) + ATP + H2O = D-methionine(in) + ADP + phosphate + H(+). Functionally, part of the ABC transporter complex MetNIQ involved in methionine import. Responsible for energy coupling to the transport system. This chain is Methionine import ATP-binding protein MetN 3, found in Bacillus cereus (strain ZK / E33L).